A 618-amino-acid chain; its full sequence is Grainyhead-like protein 1 homolog (618 aa).

The transcription activation stretch occupies residues 1-91 (MTQEYDNKRP…EVEHPEPDHS (91 aa)). The segment covering 74–92 (RRSSTAKPEVEHPEPDHSK) has biased composition (basic and acidic residues). The disordered stretch occupies residues 74–94 (RRSSTAKPEVEHPEPDHSKRN). Residue threonine 208 is modified to Phosphothreonine. The 227-residue stretch at 248–474 (SGNNFEYTLE…DLDTQPVLFI (227 aa)) folds into the Grh/CP2 DB domain. Interaction with DNA regions lie at residues 380-389 (TDFSSQKGVK) and 427-430 (RKIR).

Belongs to the grh/CP2 family. Grainyhead subfamily. In terms of assembly, binds DNA as homodimer. Homodimer, also forms heterodimers with GRHL2 or GRHL3. Methylation at Arg-9 and Lys-116 may be involved in regulating transcriptional activation. As to expression, isoform 1 is highly expressed in brain, pancreas, tonsil, placenta and kidney. Isoform 2 is highly expressed in brain and liver. Expressed at very low levels in non-steroidogenic cells.

It localises to the nucleus. Its function is as follows. Transcription factor involved in epithelial development. Binds directly to the consensus DNA sequence 5'-AACCGGTT-3'. Important regulator of DSG1 in the context of hair anchorage and epidermal differentiation, participates in the maintenance of the skin barrier. There is no genetic interaction with GRHL3, nor functional cooperativity due to diverse target gene selectivity during epithelia development. May play a role in regulating glucose homeostasis and insulin signaling. In terms of biological role, functions as a transcription activator. May function as a repressor in tissues where both isoform 1 and isoform 2 are expressed. This chain is Grainyhead-like protein 1 homolog, found in Homo sapiens (Human).